A 532-amino-acid chain; its full sequence is MATVAERCPICLEDPSNYSMALPCLHAFCYVCITRWIRQNPTCPLCKVPVESVVHTIESDSEFKETKVSVDFDYDSEEDEDSFEGQFLAVDSGDAPANISAWNGPMAFVPLNANGTAGAPRLQPLVDWLVERLDQLFETPELALVMRNIVMDTLCEHGCNEEELTRQFWPMFHEDTVPFVTDLIVQAELCVASRPILPIARGRGVEYIDSSSSSSSSEEETDSDIEVDPNNLTDPEDTSDETSTDNSSAQAPRQEDSRPARARPGPPTRGRRRGRRPAAPGPASRRSARLRRRQPRTNSRTNGGDNGEIIDLTLDSDGDTEPADVSGSLNTTDQPVLIPDEEEAAPASPHTSSNSAIICLVSELTPESEEPPRDQPVAPSGSSAGERPMRPRCSLREFARRFMALAPRDSSTSEAAGPSRLGAGPRATEPFSVAVVLVDRSSEGAGLFGGRFAQHVRRRTEDESARRRGNVLLRPRRQSVPPVPYPDIASTSPLIRQGGQRVRDLQRAFQTQPAEPEEMRCPHNCQRYRRNQ.

Zn(2+) contacts are provided by Cys-8, Cys-11, Cys-24, His-26, Cys-29, Cys-32, Cys-43, and Cys-46. The segment at 8–47 (CPICLEDPSNYSMALPCLHAFCYVCITRWIRQNPTCPLCK) adopts an RING-type zinc-finger fold. 4 disordered regions span residues 206-391 (EYID…PMRP), 406-426 (APRD…AGPR), 461-498 (EDES…IRQG), and 510-532 (QTQP…RRNQ). Composition is skewed to acidic residues over residues 217–227 (SEEETDSDIEV) and 234–243 (DPEDTSDETS). Residues 286–295 (RSARLRRRQP) show a composition bias toward basic residues.

Post-translationally, auto-ubiquitinated.

The catalysed reaction is S-ubiquitinyl-[E2 ubiquitin-conjugating enzyme]-L-cysteine + [acceptor protein]-L-lysine = [E2 ubiquitin-conjugating enzyme]-L-cysteine + N(6)-ubiquitinyl-[acceptor protein]-L-lysine.. Functionally, evades nuclear antiviral defenses triggered by dsDNA viruses. Acts during the initial stages of lytic infection and the reactivation of latent viral genome. Prevents the antiviral effect of nuclear bodies by degrading host PML and SP100. This chain is E3 ubiquitin-protein ligase ICP0 (63), found in Equus caballus (Horse).